The chain runs to 426 residues: MSEIIDIHAREILDSRGNPTIEVDVTLDDGSTGRAAVPSGASTGAYEAHEQRDGDKARYNGKGVLKAVDAVNGEICNELAGMDATEQRLVDTLMIDLDGTENKSRLGANAILGVSLAVAKAAAESSALPLYRYLGGANARILPTPMMNIINGGAHADNPVDIQEFMIMPVSAESISEAVRMGAEVFHALKKTLHDAGHNTNVGDEGGFAPNLASADEAIGFIMKSIEKAGYRPGEDIALALDAASTEFYKNGKYELAGEGKSLSSEQFGQYLADLCGRYPILSIEDGMAEDDWDGWVALTELLGDRVQLVGDDLFVTNPDRLAIGLQKGAANSILVKVNQIGTLSETLDAVELAHLHGYTAVMSHRSGETEDSTIADLAVATNCGQIKTGSLSRSDRIAKYNQLIRIEEELGPIGMYAGLARINAG.

The interval 32-53 (TGRAAVPSGASTGAYEAHEQRD) is disordered. Gln163 provides a ligand contact to (2R)-2-phosphoglycerate. Catalysis depends on Glu205, which acts as the Proton donor. 3 residues coordinate Mg(2+): Asp242, Glu285, and Asp312. (2R)-2-phosphoglycerate-binding residues include Lys337, Arg366, Ser367, and Lys388. Lys337 serves as the catalytic Proton acceptor.

This sequence belongs to the enolase family. It depends on Mg(2+) as a cofactor.

The protein localises to the cytoplasm. It localises to the secreted. Its subcellular location is the cell surface. It catalyses the reaction (2R)-2-phosphoglycerate = phosphoenolpyruvate + H2O. The protein operates within carbohydrate degradation; glycolysis; pyruvate from D-glyceraldehyde 3-phosphate: step 4/5. In terms of biological role, catalyzes the reversible conversion of 2-phosphoglycerate (2-PG) into phosphoenolpyruvate (PEP). It is essential for the degradation of carbohydrates via glycolysis. The sequence is that of Enolase from Hyphomonas neptunium (strain ATCC 15444).